Consider the following 279-residue polypeptide: Elongation factor Ts (279 aa).

The involved in Mg(2+) ion dislocation from EF-Tu stretch occupies residues 80–83 (TDFV).

It belongs to the EF-Ts family.

It localises to the cytoplasm. Its function is as follows. Associates with the EF-Tu.GDP complex and induces the exchange of GDP to GTP. It remains bound to the aminoacyl-tRNA.EF-Tu.GTP complex up to the GTP hydrolysis stage on the ribosome. This Borreliella afzelii (strain PKo) (Borrelia afzelii) protein is Elongation factor Ts.